The primary structure comprises 255 residues: Putative Myb family transcription factor At1g14600 (255 aa).

An HTH myb-type domain is found at 20–80; sequence RSPVPRLRWT…HLQMYRGSRI (61 aa). A DNA-binding region (H-T-H motif) is located at residues 51–76; that stretch reads PKLVLKIMDVKGLTISHVKSHLQMYR. The segment at 80 to 110 is disordered; it reads ITLLGKPEESSSPSSRRRRRQDNEEDHLHDN.

The protein localises to the nucleus. Putative transcription factor. In Arabidopsis thaliana (Mouse-ear cress), this protein is Putative Myb family transcription factor At1g14600.